Consider the following 309-residue polypeptide: Porphobilinogen deaminase (309 aa).

S-(dipyrrolylmethanemethyl)cysteine is present on Cys-241.

The protein belongs to the HMBS family. As to quaternary structure, monomer. It depends on dipyrromethane as a cofactor.

It catalyses the reaction 4 porphobilinogen + H2O = hydroxymethylbilane + 4 NH4(+). It functions in the pathway porphyrin-containing compound metabolism; protoporphyrin-IX biosynthesis; coproporphyrinogen-III from 5-aminolevulinate: step 2/4. Tetrapolymerization of the monopyrrole PBG into the hydroxymethylbilane pre-uroporphyrinogen in several discrete steps. This is Porphobilinogen deaminase from Bacillus cereus (strain ZK / E33L).